Here is a 287-residue protein sequence, read N- to C-terminus: Small ribosomal subunit biogenesis GTPase RsgA (287 aa).

In terms of domain architecture, CP-type G spans 61 to 218 (SSELIRPTVA…LVDTPGFTTL (158 aa)). GTP contacts are provided by residues 110 to 113 (NKED) and 161 to 169 (GPSGAGKST). Positions 242, 247, 249, and 255 each coordinate Zn(2+).

It belongs to the TRAFAC class YlqF/YawG GTPase family. RsgA subfamily. In terms of assembly, monomer. Associates with 30S ribosomal subunit, binds 16S rRNA. Zn(2+) serves as cofactor.

The protein resides in the cytoplasm. Its function is as follows. One of several proteins that assist in the late maturation steps of the functional core of the 30S ribosomal subunit. Helps release RbfA from mature subunits. May play a role in the assembly of ribosomal proteins into the subunit. Circularly permuted GTPase that catalyzes slow GTP hydrolysis, GTPase activity is stimulated by the 30S ribosomal subunit. In Clostridium perfringens (strain SM101 / Type A), this protein is Small ribosomal subunit biogenesis GTPase RsgA.